A 266-amino-acid chain; its full sequence is Undecaprenyl-diphosphatase (266 aa).

The next 8 helical transmembrane spans lie at 1–21, 43–63, 83–103, 114–134, 144–164, 186–206, 219–239, and 245–265; these read MNIF…FLPI, FDVV…QAMI, SKLA…GMIF, VEII…ASWF, TISW…LIPG, IQFA…LILI, LLAM…VFFI, and VGMM…FFFI.

The protein belongs to the UppP family.

It is found in the cell inner membrane. The catalysed reaction is di-trans,octa-cis-undecaprenyl diphosphate + H2O = di-trans,octa-cis-undecaprenyl phosphate + phosphate + H(+). Functionally, catalyzes the dephosphorylation of undecaprenyl diphosphate (UPP). Confers resistance to bacitracin. This Ruthia magnifica subsp. Calyptogena magnifica protein is Undecaprenyl-diphosphatase.